The chain runs to 278 residues: Large ribosomal subunit protein uL2 (278 aa).

Positions 222–278 (GVVMNPVDHPHGGGEGRTSGGRHPVTPWGKPTKGAKTRKNKSTDKFIIRSRHERKKR) are disordered. The segment covering 269–278 (IRSRHERKKR) has biased composition (basic residues).

It belongs to the universal ribosomal protein uL2 family. Part of the 50S ribosomal subunit. Forms a bridge to the 30S subunit in the 70S ribosome.

In terms of biological role, one of the primary rRNA binding proteins. Required for association of the 30S and 50S subunits to form the 70S ribosome, for tRNA binding and peptide bond formation. It has been suggested to have peptidyltransferase activity; this is somewhat controversial. Makes several contacts with the 16S rRNA in the 70S ribosome. The protein is Large ribosomal subunit protein uL2 of Maricaulis maris (strain MCS10) (Caulobacter maris).